Consider the following 811-residue polypeptide: MEYNAKNIEYKWQQIWKKNGYSEPKDDYSLPKKYILSMFPYPSGRLHMGHVRNYSIGDALSRYYRNRGYNVLQPIGFDSFGMPAENAAIKHKIHPKIWTYDNIDYMTKELDALGFSFSKKRLFATSDPLYTRWEQEFFIRMYEKGLVYRKSAVVNWCENDQTVLANEQVEDGKCWRCGHEVIQKEMPGYYLKITDYANELLECLKDLEGKWPNQVLTMQENWIGKSYGLEFEFKFDSSSKILLDGMDGFKVFTTRPDTIYGVSYAAIAPEHIVVKKLLEKNILDDATSAKLKFILNQSPKQRQSIDKDGVSLGLNVIHPLTNELIPVWCANFVLAEYGGGAVMSVPAHDERDFEFASKFNLNIKQIIKSDTLPYCEKSGVYINSELINGLAYEEAREKIISKFEKEGWGNRVTNYKLRDWGISRQRYWGAPIPMIHCKKCGVVPENISNLPVKLPDDVVITGEGNPLDKHSEFKNCKCPKCGSQATRETDTMDTFFESSWYFARFASDEKTWEDVAFDKKSVDYWMSVDQYIGGIEHAILHLLYARFFQKALRDLGYLRDCEPFDSLLTQGMVLKDGSKMSKSKGNTVDPDDIINKFGADTARLFILFAAPPQKELEWNDSAVEGAFKFINRLYDRSDNAYKTEILPQINHSNLNKDEKYARLKVYEALKKSTDVFENSFAFNTLIAACMEALNGLNAQNNKDIWTEGYFIILNLLEPIIPHACHELSNELFGLKNFTKLSLKDEVFVKDSLNLAITVNGKRRSEIEVSAFESDDKILEIAKQEVSKWIEGKEILKEIYVPNKLVNLVIKG.

Residues 40–50 (PYPSGRLHMGH) carry the 'HIGH' region motif. Residues 579–583 (KMSKS) carry the 'KMSKS' region motif. Residue K582 coordinates ATP.

It belongs to the class-I aminoacyl-tRNA synthetase family.

It localises to the cytoplasm. The catalysed reaction is tRNA(Leu) + L-leucine + ATP = L-leucyl-tRNA(Leu) + AMP + diphosphate. This chain is Leucine--tRNA ligase, found in Campylobacter fetus subsp. fetus (strain 82-40).